The sequence spans 156 residues: Mitochondrial intermembrane space cysteine motif-containing protein MIX17 (156 aa).

Residues 1–21 (MARSRGSSRPISRSRPTQTRS) constitute a mitochondrion transit peptide. Low complexity predominate over residues 1–21 (MARSRGSSRPISRSRPTQTRS). Disordered regions lie at residues 1–50 (MARS…GAQT) and 78–110 (AGITGMFSGSGSDSAPVEQQQQNMANTSGQTQT). Over residues 84–110 (FSGSGSDSAPVEQQQQNMANTSGQTQT) the composition is skewed to polar residues. One can recognise a CHCH domain in the interval 115–156 (GRTCEIDARNFTRCLDENNGNFQICDYYLQQLKACQEAARQY). Positions 118–128 (CEIDARNFTRC) match the Cx9C motif motif. 2 disulfides stabilise this stretch: C118-C149 and C128-C139.

It localises to the mitochondrion intermembrane space. The polypeptide is Mitochondrial intermembrane space cysteine motif-containing protein MIX17 (MIX17) (Saccharomyces cerevisiae (strain ATCC 204508 / S288c) (Baker's yeast)).